Consider the following 1002-residue polypeptide: UPF0182 protein alr1037 (1002 aa).

9 helical membrane-spanning segments follow: residues 7-29 (FRLSIVFVGLWLLLDLSSRLGAE), 49-71 (RGVLWVVAAGVTAVYLWGNLALA), 123-145 (LRWLLPLAFVFSLLAGLILVHYG), 178-200 (QVFSQVLYLGLIVGIAIAILIYS), 202-224 (FFLRAIAVVLSVVFGTILFYNWA), 258-280 (LLELWLMGMFLYGFIAVTLTYLL), 300-319 (HLYGMGGLLMLMVAFSYWLS), 339-361 (VVVQLPIYNILCVLGLAIAFYLL), and 382-404 (GAYLFVVVAAGSVLPTIVQYLIV).

The protein belongs to the UPF0182 family.

The protein localises to the cell membrane. This chain is UPF0182 protein alr1037, found in Nostoc sp. (strain PCC 7120 / SAG 25.82 / UTEX 2576).